Here is a 354-residue protein sequence, read N- to C-terminus: tRNA N6-adenosine threonylcarbamoyltransferase (354 aa).

2 residues coordinate Fe cation: His-116 and His-120. Substrate-binding positions include 139 to 143, Asp-172, Gly-185, and Asn-281; that span reads LVSGG. Position 309 (Asp-309) interacts with Fe cation.

It belongs to the KAE1 / TsaD family. Fe(2+) is required as a cofactor.

It is found in the cytoplasm. The enzyme catalyses L-threonylcarbamoyladenylate + adenosine(37) in tRNA = N(6)-L-threonylcarbamoyladenosine(37) in tRNA + AMP + H(+). In terms of biological role, required for the formation of a threonylcarbamoyl group on adenosine at position 37 (t(6)A37) in tRNAs that read codons beginning with adenine. Is involved in the transfer of the threonylcarbamoyl moiety of threonylcarbamoyl-AMP (TC-AMP) to the N6 group of A37, together with TsaE and TsaB. TsaD likely plays a direct catalytic role in this reaction. The chain is tRNA N6-adenosine threonylcarbamoyltransferase from Parasynechococcus marenigrum (strain WH8102).